The chain runs to 436 residues: POU domain, class 2, transcription factor 3 (436 aa).

Disordered regions lie at residues 1–40 (MVNL…NGLD), 140–186 (QTGP…DEPS), and 256–278 (AESS…SEVF). A POU-specific domain is found at 183 to 257 (DEPSDLEELE…LLEKWLNDAE (75 aa)). Residues 258–275 (SSPSDPSVSTPSSYPSLS) show a composition bias toward low complexity. The homeobox DNA-binding region spans 281-340 (KRKKRTSIETNIRLTLEKRFQDNPKPSSEEISMIAEQLSMEKEVVRVWFCNRRQKEKRIN). The disordered stretch occupies residues 363–421 (LGPLSVPPVHSTMPGTVTSSCSPGNNSRPSSPGSGLHASSPTASQNNSKAAVNSASSFN). Composition is skewed to low complexity over residues 381–397 (SSCS…PGSG) and 405–421 (ASQN…SSFN).

This sequence belongs to the POU transcription factor family. Class-2 subfamily. In terms of assembly, interacts (via the POU domain) with POU2AF1 and POU2AF2 in a DNA-dependent manner; this interaction recruits POU2AF2 to chromatin and increases POU2F3 transactivation activity. Specifically expressed in epidermis and cultured keratinocytes.

The protein localises to the nucleus. Its function is as follows. Transcription factor that binds to the octamer motif (5'-ATTTGCAT-3') and regulates cell type-specific differentiation pathways. Involved in the regulation of keratinocytes differentiation. The POU2F3-POU2AF2/POU2AF3 complex drives the expression of tuft-cell-specific genes, a rare chemosensory cells that coordinate immune and neural functions within mucosal epithelial tissues. This Homo sapiens (Human) protein is POU domain, class 2, transcription factor 3.